Consider the following 417-residue polypeptide: uncharacterized protein (417 aa).

A helical membrane pass occupies residues 10-30 (ALVCFSILSILVLACGCVNTP). The interval 84 to 106 (QENHPLQSNQNYEQTNGNFNEEN) is disordered. Positions 86–106 (NHPLQSNQNYEQTNGNFNEEN) are enriched in polar residues. The helical transmembrane segment at 148–168 (LYYIKVIDPIVGGLAGIDIYV) threads the bilayer.

The protein resides in the cell membrane. This is an uncharacterized protein from Methanocaldococcus jannaschii (strain ATCC 43067 / DSM 2661 / JAL-1 / JCM 10045 / NBRC 100440) (Methanococcus jannaschii).